The chain runs to 187 residues: MIKSVIAGAVAMAVVSFGANAAASIPQGQGEVSFKGTVVDAPCGIETQSAKQEIDFGQISKSFLQEGGETQPKDLNIKLVNCDITNLKQLQGGAAKKGTVSLTFSGVPAENADDMLQTVGDTNTAIVVTDSSGKRVKFDGATETGASNLINGDNTIHFTAFVKKDNSGKNVAEGAFSAVANFNLTYQ.

Positions 1 to 21 are cleaved as a signal peptide; that stretch reads MIKSVIAGAVAMAVVSFGANA. C43 and C82 are oxidised to a cystine.

It belongs to the fimbrial protein family.

The protein resides in the fimbrium. Its function is as follows. Fimbriae (also called pili), polar filaments radiating from the surface of the bacterium to a length of 0.5-1.5 micrometers and numbering 100-300 per cell, enable bacteria to colonize the epithelium of specific host organs. The sequence is that of KS71A fimbrillin (KS71A) from Escherichia coli.